The following is a 291-amino-acid chain: 4-diphosphocytidyl-2-C-methyl-D-erythritol kinase (291 aa).

Residue K11 is part of the active site. 95–105 (PVAAGLAGGSS) lines the ATP pocket. D137 is a catalytic residue.

It belongs to the GHMP kinase family. IspE subfamily.

The enzyme catalyses 4-CDP-2-C-methyl-D-erythritol + ATP = 4-CDP-2-C-methyl-D-erythritol 2-phosphate + ADP + H(+). It functions in the pathway isoprenoid biosynthesis; isopentenyl diphosphate biosynthesis via DXP pathway; isopentenyl diphosphate from 1-deoxy-D-xylulose 5-phosphate: step 3/6. Its function is as follows. Catalyzes the phosphorylation of the position 2 hydroxy group of 4-diphosphocytidyl-2C-methyl-D-erythritol. The protein is 4-diphosphocytidyl-2-C-methyl-D-erythritol kinase of Alkaliphilus metalliredigens (strain QYMF).